The chain runs to 299 residues: ATP phosphoribosyltransferase (299 aa).

Belongs to the ATP phosphoribosyltransferase family. Long subfamily. It depends on Mg(2+) as a cofactor.

The protein localises to the cytoplasm. It carries out the reaction 1-(5-phospho-beta-D-ribosyl)-ATP + diphosphate = 5-phospho-alpha-D-ribose 1-diphosphate + ATP. The protein operates within amino-acid biosynthesis; L-histidine biosynthesis; L-histidine from 5-phospho-alpha-D-ribose 1-diphosphate: step 1/9. Feedback inhibited by histidine. Catalyzes the condensation of ATP and 5-phosphoribose 1-diphosphate to form N'-(5'-phosphoribosyl)-ATP (PR-ATP). Has a crucial role in the pathway because the rate of histidine biosynthesis seems to be controlled primarily by regulation of HisG enzymatic activity. The sequence is that of ATP phosphoribosyltransferase from Shewanella sp. (strain ANA-3).